The following is a 507-amino-acid chain: ATP synthase subunit alpha, chloroplastic (507 aa).

Glycine 170–threonine 177 contacts ATP.

This sequence belongs to the ATPase alpha/beta chains family. F-type ATPases have 2 components, CF(1) - the catalytic core - and CF(0) - the membrane proton channel. CF(1) has five subunits: alpha(3), beta(3), gamma(1), delta(1), epsilon(1). CF(0) has four main subunits: a, b, b' and c.

The protein resides in the plastid. It localises to the chloroplast thylakoid membrane. It catalyses the reaction ATP + H2O + 4 H(+)(in) = ADP + phosphate + 5 H(+)(out). Functionally, produces ATP from ADP in the presence of a proton gradient across the membrane. The alpha chain is a regulatory subunit. The polypeptide is ATP synthase subunit alpha, chloroplastic (Manihot esculenta (Cassava)).